The sequence spans 616 residues: Dihydroxy-acid dehydratase (616 aa).

Position 81 (Asp81) interacts with Mg(2+). Residue Cys122 participates in [2Fe-2S] cluster binding. Asp123 and Lys124 together coordinate Mg(2+). Lys124 bears the N6-carboxylysine mark. Cys195 is a [2Fe-2S] cluster binding site. Glu491 lines the Mg(2+) pocket. The active-site Proton acceptor is the Ser517.

The protein belongs to the IlvD/Edd family. In terms of assembly, homodimer. It depends on [2Fe-2S] cluster as a cofactor. Requires Mg(2+) as cofactor.

It catalyses the reaction (2R)-2,3-dihydroxy-3-methylbutanoate = 3-methyl-2-oxobutanoate + H2O. The catalysed reaction is (2R,3R)-2,3-dihydroxy-3-methylpentanoate = (S)-3-methyl-2-oxopentanoate + H2O. It participates in amino-acid biosynthesis; L-isoleucine biosynthesis; L-isoleucine from 2-oxobutanoate: step 3/4. The protein operates within amino-acid biosynthesis; L-valine biosynthesis; L-valine from pyruvate: step 3/4. Functions in the biosynthesis of branched-chain amino acids. Catalyzes the dehydration of (2R,3R)-2,3-dihydroxy-3-methylpentanoate (2,3-dihydroxy-3-methylvalerate) into 2-oxo-3-methylpentanoate (2-oxo-3-methylvalerate) and of (2R)-2,3-dihydroxy-3-methylbutanoate (2,3-dihydroxyisovalerate) into 2-oxo-3-methylbutanoate (2-oxoisovalerate), the penultimate precursor to L-isoleucine and L-valine, respectively. This Yersinia pseudotuberculosis serotype O:3 (strain YPIII) protein is Dihydroxy-acid dehydratase.